The sequence spans 104 residues: Phosphoribosyl-ATP pyrophosphatase (104 aa).

This sequence belongs to the PRA-PH family.

The protein localises to the cytoplasm. The catalysed reaction is 1-(5-phospho-beta-D-ribosyl)-ATP + H2O = 1-(5-phospho-beta-D-ribosyl)-5'-AMP + diphosphate + H(+). The protein operates within amino-acid biosynthesis; L-histidine biosynthesis; L-histidine from 5-phospho-alpha-D-ribose 1-diphosphate: step 2/9. In Rhizobium rhizogenes (strain K84 / ATCC BAA-868) (Agrobacterium radiobacter), this protein is Phosphoribosyl-ATP pyrophosphatase.